An 88-amino-acid polypeptide reads, in one-letter code: Small ribosomal subunit protein uS15 (88 aa).

It belongs to the universal ribosomal protein uS15 family. Part of the 30S ribosomal subunit. Forms a bridge to the 50S subunit in the 70S ribosome, contacting the 23S rRNA.

One of the primary rRNA binding proteins, it binds directly to 16S rRNA where it helps nucleate assembly of the platform of the 30S subunit by binding and bridging several RNA helices of the 16S rRNA. Functionally, forms an intersubunit bridge (bridge B4) with the 23S rRNA of the 50S subunit in the ribosome. This Mycoplasma mycoides subsp. mycoides SC (strain CCUG 32753 / NCTC 10114 / PG1) protein is Small ribosomal subunit protein uS15.